A 62-amino-acid polypeptide reads, in one-letter code: Bowman-Birk type proteinase inhibitor B7 (62 aa).

Intrachain disulfides connect C5–C59, C6–C23, C13–C21, C30–C37, and C34–C51.

Belongs to the Bowman-Birk serine protease inhibitor family. Expressed in bulb (at protein level).

Serine protease inhibitor. Inhibits trypsin (Ki = 65 nM) and weakly inhibits chymotrypsin (Ki = 295 nM). Does not inhibit bacterial subtilisin. This is Bowman-Birk type proteinase inhibitor B7 from Hyacinthus orientalis (Common hyacinth).